The following is a 186-amino-acid chain: Elongation factor P (186 aa).

Belongs to the elongation factor P family.

Its subcellular location is the cytoplasm. Its pathway is protein biosynthesis; polypeptide chain elongation. Its function is as follows. Involved in peptide bond synthesis. Stimulates efficient translation and peptide-bond synthesis on native or reconstituted 70S ribosomes in vitro. Probably functions indirectly by altering the affinity of the ribosome for aminoacyl-tRNA, thus increasing their reactivity as acceptors for peptidyl transferase. The chain is Elongation factor P from Streptococcus sanguinis (strain SK36).